Consider the following 361-residue polypeptide: MLVSDFHFDLPDELIARYPTEERTASRLLHLNGETGHFEDKQFFDLLDQINEGDLLIFNNTRVIPARLYGRKASGGKLEVLVERVLDEHRCLAHVRASKAPKEGAELVLGEDKLGEGNGFKAIMTARHDALFELHFNEEQPVFDLLQQAGHMPLPPYIDRPDEDADQERYQTVYSKVLGAVAAPTAGLHFDNPTLEKLKAKGVNIAFVTLHVGAGTFQPVRVDNILDHKMHAEYAEVSQAVVDQILATKATGKRVIAVGTTSVRSIESAAQAAEKEGKLIAPFFSDTSIFLYPGKTFRIVDALVTNFHLPESTLIMLVSAFAGYRNTMKAYQHAVEAKYRFFSYGDAMFINKNPNALNDLP.

This sequence belongs to the QueA family. As to quaternary structure, monomer.

Its subcellular location is the cytoplasm. The catalysed reaction is 7-aminomethyl-7-carbaguanosine(34) in tRNA + S-adenosyl-L-methionine = epoxyqueuosine(34) in tRNA + adenine + L-methionine + 2 H(+). It participates in tRNA modification; tRNA-queuosine biosynthesis. Functionally, transfers and isomerizes the ribose moiety from AdoMet to the 7-aminomethyl group of 7-deazaguanine (preQ1-tRNA) to give epoxyqueuosine (oQ-tRNA). The chain is S-adenosylmethionine:tRNA ribosyltransferase-isomerase from Actinobacillus pleuropneumoniae serotype 7 (strain AP76).